We begin with the raw amino-acid sequence, 218 residues long: MRTRVKICGLTREQDIASAVQAGADAIGFVFYPASKRHVDPVRAAQLRREVPAFVDVVALFVNPRPDEVQAVLDHVAPDLLQFHGDETPQDCGRYGRRYLRAFRAGAPGLDSAAGLAAACRQYADAAGWLFDSYSAGYGGSGQGFDHGLLAGVQADPASRAIVLAGGLHPGNVADAVRAVRPWALDVSSGVEDAPGVKSADKIRQLMAAIKSVDQVAR.

The protein belongs to the TrpF family.

The catalysed reaction is N-(5-phospho-beta-D-ribosyl)anthranilate = 1-(2-carboxyphenylamino)-1-deoxy-D-ribulose 5-phosphate. It functions in the pathway amino-acid biosynthesis; L-tryptophan biosynthesis; L-tryptophan from chorismate: step 3/5. This Bordetella bronchiseptica (strain ATCC BAA-588 / NCTC 13252 / RB50) (Alcaligenes bronchisepticus) protein is N-(5'-phosphoribosyl)anthranilate isomerase.